Consider the following 326-residue polypeptide: Protein SEH1 (326 aa).

WD repeat units follow at residues 7 to 46 (TLDS…SSTF), 54 to 95 (VSES…AHGL), 105 to 146 (NKSS…ELKN), 224 to 266 (DKGD…DLEG), and 278 to 317 (GHQG…EWHE).

Belongs to the WD repeat SEC13 family. As to quaternary structure, part of the nuclear pore complex (NPC). The NPC has an eight-fold symmetrical structure comprising a central transport channel and two rings, the cytoplasmic and nuclear rings, to which eight filaments are attached. The cytoplasmic filaments have loose ends, while the nuclear filaments are joined in a distal ring, forming a nuclear basket. NPCs are highly dynamic in configuration and composition, and can be devided in 3 subcomplexes, the NUP62 subcomplex, the NUP107-160 subcomplex and the NUP93 subcomplex, containing approximately 30 different nucleoporin proteins.

Its subcellular location is the nucleus envelope. It is found in the nucleus. It localises to the cytoplasm. The protein resides in the nuclear pore complex. Required for proper export of mRNAs from the nucleus to the cytoplasm. The chain is Protein SEH1 from Arabidopsis thaliana (Mouse-ear cress).